We begin with the raw amino-acid sequence, 143 residues long: Flagellar assembly factor FliW (143 aa).

Belongs to the FliW family. In terms of assembly, interacts with translational regulator CsrA and flagellin(s).

The protein resides in the cytoplasm. In terms of biological role, acts as an anti-CsrA protein, binds CsrA and prevents it from repressing translation of its target genes, one of which is flagellin. Binds to flagellin and participates in the assembly of the flagellum. In Clostridium botulinum (strain Langeland / NCTC 10281 / Type F), this protein is Flagellar assembly factor FliW.